We begin with the raw amino-acid sequence, 64 residues long: Lectin-A (64 aa).

Chitin-binding type-1 domains are found at residues 1-20 and 22-45; these read APECGREAHCGDDCQSQVVT and DFDDRTCPKLLCCSKDGWCGNTDA.

Glycosylated.

Functionally, N-acetyl-D-glucosamine binding lectin. Shows low hemagglutinating activity towards human erythrocytes. Has low mitogenic activity towards human peripheral blood lymphocytes. The polypeptide is Lectin-A (Phytolacca americana (American pokeweed)).